Consider the following 285-residue polypeptide: Protoheme IX farnesyltransferase (285 aa).

A run of 9 helical transmembrane segments spans residues Leu-13–Ala-33, Leu-40–Ile-60, Glu-89–Asn-109, Ile-110–Leu-130, Leu-137–Leu-157, Gly-165–Leu-185, Ala-194–Ile-214, Ile-230–Leu-252, and Phe-265–Ile-285.

It belongs to the UbiA prenyltransferase family. Protoheme IX farnesyltransferase subfamily.

It localises to the cell membrane. The catalysed reaction is heme b + (2E,6E)-farnesyl diphosphate + H2O = Fe(II)-heme o + diphosphate. Its pathway is porphyrin-containing compound metabolism; heme O biosynthesis; heme O from protoheme: step 1/1. Converts heme B (protoheme IX) to heme O by substitution of the vinyl group on carbon 2 of heme B porphyrin ring with a hydroxyethyl farnesyl side group. This chain is Protoheme IX farnesyltransferase, found in Saccharolobus islandicus (strain Y.N.15.51 / Yellowstone #2) (Sulfolobus islandicus).